A 142-amino-acid polypeptide reads, in one-letter code: MAKKIQSYIKLQVSAGAANPSPPIGPALGQKGVNIMEFCKLFNKKTENIEKGLPIPVIITVYSDRSFTFITKTPPASVLLKKLSGIKKGSSKNKSEKIGKINRSQIKEIAIIKNNDMTGSNIENMMRSIEGTAKSMGLIIEG.

The protein belongs to the universal ribosomal protein uL11 family. Part of the ribosomal stalk of the 50S ribosomal subunit. Interacts with L10 and the large rRNA to form the base of the stalk. L10 forms an elongated spine to which L12 dimers bind in a sequential fashion forming a multimeric L10(L12)X complex. One or more lysine residues are methylated.

Its function is as follows. Forms part of the ribosomal stalk which helps the ribosome interact with GTP-bound translation factors. This chain is Large ribosomal subunit protein uL11, found in Buchnera aphidicola subsp. Acyrthosiphon pisum (strain APS) (Acyrthosiphon pisum symbiotic bacterium).